Reading from the N-terminus, the 74-residue chain is ATP synthase subunit c (74 aa).

The next 2 helical transmembrane spans lie at 5 to 25 (LAYIGAGLAGMGTGIAALGVG) and 49 to 69 (LFIGIAFAEALGIFSFLVALL).

This sequence belongs to the ATPase C chain family. F-type ATPases have 2 components, F(1) - the catalytic core - and F(0) - the membrane proton channel. F(1) has five subunits: alpha(3), beta(3), gamma(1), delta(1), epsilon(1). F(0) has three main subunits: a(1), b(2) and c(10-14). The alpha and beta chains form an alternating ring which encloses part of the gamma chain. F(1) is attached to F(0) by a central stalk formed by the gamma and epsilon chains, while a peripheral stalk is formed by the delta and b chains.

It localises to the cell inner membrane. Its function is as follows. F(1)F(0) ATP synthase produces ATP from ADP in the presence of a proton or sodium gradient. F-type ATPases consist of two structural domains, F(1) containing the extramembraneous catalytic core and F(0) containing the membrane proton channel, linked together by a central stalk and a peripheral stalk. During catalysis, ATP synthesis in the catalytic domain of F(1) is coupled via a rotary mechanism of the central stalk subunits to proton translocation. Key component of the F(0) channel; it plays a direct role in translocation across the membrane. A homomeric c-ring of between 10-14 subunits forms the central stalk rotor element with the F(1) delta and epsilon subunits. The chain is ATP synthase subunit c from Ruegeria sp. (strain TM1040) (Silicibacter sp.).